The following is a 145-amino-acid chain: MSVAEFDADVIVDARDCIMGRVASQVAEQALDGETVAVVNAERAVITGREEQIVEKYEKRVDIGNDNGYFYPKRPDGIFKRTIRGMLPHKKQRGREAFESVRVYLGNPYDEDGEVLDGTSLDRLSNIKFVTLGEISETLGANKTW.

Belongs to the universal ribosomal protein uL13 family. In terms of assembly, part of the 50S ribosomal subunit. Interacts weakly with proteins L3 and L6.

This protein is one of the early assembly proteins of the 50S ribosomal subunit. Binds to 23S rRNA. In Haloarcula marismortui (strain ATCC 43049 / DSM 3752 / JCM 8966 / VKM B-1809) (Halobacterium marismortui), this protein is Large ribosomal subunit protein uL13.